The chain runs to 79 residues: MDIKAEVIEIIEELFMEDVSDMMDEDLFDAGVLDSMGTVELIVELENRFDIRVPVSEFGRDDWNTANKIVEGVTELRNA.

The region spanning M1 to R77 is the Carrier domain. At S35 the chain carries O-(pantetheine 4'-phosphoryl)serine.

The protein belongs to the DltC family. Post-translationally, 4'-phosphopantetheine is transferred from CoA to a specific serine of apo-DCP.

The protein localises to the cytoplasm. It functions in the pathway cell wall biogenesis; lipoteichoic acid biosynthesis. Its function is as follows. Carrier protein involved in the D-alanylation of lipoteichoic acid (LTA). The loading of thioester-linked D-alanine onto DltC is catalyzed by D-alanine--D-alanyl carrier protein ligase DltA. The DltC-carried D-alanyl group is further transferred to cell membrane phosphatidylglycerol (PG) by forming an ester bond, probably catalyzed by DltD. D-alanylation of LTA plays an important role in modulating the properties of the cell wall in Gram-positive bacteria, influencing the net charge of the cell wall. This Streptococcus sanguinis (strain SK36) protein is D-alanyl carrier protein.